The sequence spans 105 residues: N(4)-acetylcytidine amidohydrolase (105 aa).

One can recognise an ASCH domain in the interval 8–93 (TFFEFLTPLV…ALIQEIYPNI (86 aa)). K22 serves as the catalytic Proton acceptor. Catalysis depends on T25, which acts as the Nucleophile. Catalysis depends on E75, which acts as the Proton donor.

This sequence belongs to the N(4)-acetylcytidine amidohydrolase family.

It carries out the reaction N(4)-acetylcytidine + H2O = cytidine + acetate + H(+). The enzyme catalyses N(4)-acetyl-2'-deoxycytidine + H2O = 2'-deoxycytidine + acetate + H(+). It catalyses the reaction N(4)-acetylcytosine + H2O = cytosine + acetate + H(+). In terms of biological role, catalyzes the hydrolysis of N(4)-acetylcytidine (ac4C). The chain is N(4)-acetylcytidine amidohydrolase from Vibrio cholerae serotype O1 (strain ATCC 39315 / El Tor Inaba N16961).